The following is an 832-amino-acid chain: MMEEEELEFVEELEAVLQLTPEVQLAIEQVFPSQDPLDRADFNAVEYINTLFPTEQSLANIDEVVNKIRLKIRRLDDNIRTVVRGQTNVGQDGRQALEEAQKAIQQLFGKIKDIKDKAEKSEQMVKEITRDIKQLDHAKRHLTTSITTLNHLHMLAGGVDSLEAMTRRRQYGEVANLLQGVMNVLEHFHKYMGIPQIRQLSERVKAAQTELGQQILADFEEAFPSQGTKRPGGPSNVLRDACLVANILDPRIKQEIIKKFIKQHLSEYLVLFQENQDVAWLDKIDRRYAWIKRQLVDYEEKYGRMFPREWCMAERIAVEFCHVTRAELAKIMRTRAKEIEVKLLLFAIQRTTNFEGFLAKRFSGCTLTDGTLKKLESPPPSTNPFLEDEPTPEMEELATEKGDLDQPKKPKAPDNPFHGIVSKCFEPHLYVYIESQDKNLGELIDRFVADFKAQGPPKPNTDEGGAVLPSCADLFVYYKKCMVQCSQLSTGEPMIALTTIFQKYLREYAWKILSGNLPKTTTSSGGLTISSLLKEKEGSEVAKFTLEELCLICNILSTAEYCLATTQQLEEKLKEKVDVSLIERINLTGEMDTFSTVISSSIQLLVQDLDAACDPALTAMSKMQWQNVEHVGDQSPYVTSVILHIKQNVPIIRDNLASTRKYFTQFCVKFANSFIPKFITHLFKCKPISMVGAEQLLLDTHSLKMVLLDLPSISSQVVRKAPASYTKIVVKGMTRAEMILKVVMAPHEPLVVFVDNYIKLLTDCNTETFQKILDMKGLKRSEQSSMLELLRQRLPAPPSGAESSGSLSLTAPTPEQESSRIRKLEKLIKKRL.

Residues 97-138 adopt a coiled-coil conformation; that stretch reads LEEAQKAIQQLFGKIKDIKDKAEKSEQMVKEITRDIKQLDHA. N6-acetyllysine occurs at positions 110 and 360. The segment at 373-412 is disordered; sequence KKLESPPPSTNPFLEDEPTPEMEELATEKGDLDQPKKPKA. Position 377 is a phosphoserine (serine 377). Positions 386–397 are enriched in acidic residues; the sequence is LEDEPTPEMEEL. Position 391 is a phosphothreonine (threonine 391). Residues 398–412 are compositionally biased toward basic and acidic residues; that stretch reads ATEKGDLDQPKKPKA. At serine 580 the chain carries Phosphoserine. A disordered region spans residues 794-822; sequence LPAPPSGAESSGSLSLTAPTPEQESSRIR. A compositionally biased stretch (low complexity) spans 799 to 809; it reads SGAESSGSLSL.

It belongs to the VPS53 family. Component of the Golgi-associated retrograde protein (GARP) complex, also called VFT (VPS fifty-three) complex, composed of VPS51, VPS52, VPS53 and VPS54. Component of the endosome-associated retrograde protein (EARP) complex, composed of VPS51, VPS52, VPS53 and VPS50/Syndetin. EIPR1 interacts with both EARP and GARP complexes and mediates the recruitment of the GARP complex to the trans-Golgi network. Interacts with VPS50 in an EIPR1-independent manner.

The protein localises to the golgi apparatus. The protein resides in the trans-Golgi network membrane. It is found in the endosome membrane. Its subcellular location is the recycling endosome. Its function is as follows. Acts as a component of the GARP complex that is involved in retrograde transport from early and late endosomes to the trans-Golgi network (TGN). The GARP complex is required for the maintenance of the cycling of mannose 6-phosphate receptors between the TGN and endosomes, this cycling is necessary for proper lysosomal sorting of acid hydrolases such as CTSD. Acts as a component of the EARP complex that is involved in endocytic recycling. The EARP complex associates with Rab4-positive endosomes and promotes recycling of internalized transferrin receptor (TFRC) to the plasma membrane. The protein is Vacuolar protein sorting-associated protein 53 homolog (VPS53) of Homo sapiens (Human).